Consider the following 305-residue polypeptide: Methionyl-tRNA formyltransferase (305 aa).

111–114 is a (6S)-5,6,7,8-tetrahydrofolate binding site; that stretch reads SLLP.

Belongs to the Fmt family.

It carries out the reaction L-methionyl-tRNA(fMet) + (6R)-10-formyltetrahydrofolate = N-formyl-L-methionyl-tRNA(fMet) + (6S)-5,6,7,8-tetrahydrofolate + H(+). In terms of biological role, attaches a formyl group to the free amino group of methionyl-tRNA(fMet). The formyl group appears to play a dual role in the initiator identity of N-formylmethionyl-tRNA by promoting its recognition by IF2 and preventing the misappropriation of this tRNA by the elongation apparatus. This chain is Methionyl-tRNA formyltransferase, found in Helicobacter pylori (strain P12).